Here is a 102-residue protein sequence, read N- to C-terminus: Biotrophy-associated secreted protein 4 (102 aa).

An N-terminal signal peptide occupies residues 1-21 (MQLSFSAIAILLAFAVNHATA). The N-linked (GlcNAc...) asparagine glycan is linked to asparagine 36.

The protein localises to the secreted. Its function is as follows. Secreted effector involved in biotrophic colonization of plant cells. Participates in transition from the biotrophic to the necrotrophic phase of Magnaporthe oryzae. Elicits rice basic defense responses during the early stage of interaction and promotes cell death in the late stage of compatible interaction. This chain is Biotrophy-associated secreted protein 4, found in Pyricularia oryzae (strain 70-15 / ATCC MYA-4617 / FGSC 8958) (Rice blast fungus).